We begin with the raw amino-acid sequence, 660 residues long: Chaperone protein DnaK (660 aa).

A Phosphothreonine; by autocatalysis modification is found at Thr201. The disordered stretch occupies residues 599 to 660 (EAMQAQSASA…ADVEIVDKPE (62 aa)). Over residues 600-617 (AMQAQSASAAASSAANAQ) the composition is skewed to low complexity.

Belongs to the heat shock protein 70 family.

Its function is as follows. Acts as a chaperone. The chain is Chaperone protein DnaK from Chlamydia trachomatis serovar A (strain ATCC VR-571B / DSM 19440 / HAR-13).